The sequence spans 524 residues: Putative ribose/galactose/methyl galactoside import ATP-binding protein 1 (524 aa).

ABC transporter domains follow at residues 35–271 (LEVR…VGRE) and 281–520 (VPIG…RIMD). 67-74 (GENGAGKS) lines the ATP pocket.

The protein belongs to the ABC transporter superfamily. Carbohydrate importer 2 (CUT2) (TC 3.A.1.2) family.

It localises to the cell inner membrane. The catalysed reaction is D-ribose(out) + ATP + H2O = D-ribose(in) + ADP + phosphate + H(+). The enzyme catalyses D-galactose(out) + ATP + H2O = D-galactose(in) + ADP + phosphate + H(+). Functionally, part of an ABC transporter complex involved in carbohydrate import. Could be involved in ribose, galactose and/or methyl galactoside import. Responsible for energy coupling to the transport system. The chain is Putative ribose/galactose/methyl galactoside import ATP-binding protein 1 from Burkholderia cenocepacia (strain HI2424).